The chain runs to 183 residues: Putative calmodulin-like protein 2 (183 aa).

EF-hand domains are found at residues 7-42, 43-78, 80-115, and 116-151; these read EQIA…LGQS, PTEA…KLRD, GAED…LGDP, and LSDD…KRRQ. Ca(2+) contacts are provided by D20, D22, D24, T26, E31, D56, D58, S60, S62, E67, D93, D95, N97, E104, D129, D131, D133, Q135, and E140. Residues 154 to 183 form a disordered region; the sequence is MEGHGSGGHRSSNSHKKSGCCGPNSSCTIL. 2 S-palmitoyl cysteine lipidation sites follow: C173 and C174. C180 bears the Cysteine methyl ester mark. C180 carries S-farnesyl cysteine lipidation. The propeptide at 181–183 is removed in mature form; the sequence is TIL.

It belongs to the calmodulin family.

The protein resides in the membrane. Potential calcium sensor. The polypeptide is Putative calmodulin-like protein 2 (CML2) (Oryza sativa subsp. japonica (Rice)).